We begin with the raw amino-acid sequence, 918 residues long: Glutamate receptor ionotropic, kainate 1 (918 aa).

An N-terminal signal peptide occupies residues 1–30; the sequence is MELGTLLAQPGLWTRDTSWALLYFLCYILP. Residues 31-576 are Extracellular-facing; the sequence is QTAPQVLRIG…VFSFLNPLSP (546 aa). N68, N74, N276, N379, N428, N439, and N446 each carry an N-linked (GlcNAc...) asparagine glycan. P531, T533, and R538 together coordinate L-glutamate. An N-linked (GlcNAc...) asparagine glycan is attached at N561. Residues 577 to 597 form a helical membrane-spanning segment; sequence DIWMYVLLACLGVSCVLFVIA. At 598-653 the chain is on the cytoplasmic side; sequence RFTPYEWYNPHPCNPDSDVVENNFTLLNSFWFGVGALMQQGSELMPKALSTRIVGG. Residues 654 to 674 traverse the membrane as a helical segment; the sequence is IWWFFTLIIISSYTANLAAFL. Residues 675-834 are Extracellular-facing; it reads TVERMESPID…KEASALGVEN (160 aa). Residues S704 and T705 each contribute to the L-glutamate site. S725 is modified (phosphoserine; by PKC). E753 is an L-glutamate binding site. T761 carries the phosphothreonine; by PKC modification. A disulfide bridge links C765 with C819. N-linked (GlcNAc...) asparagine glycosylation occurs at N766. The chain crosses the membrane as a helical span at residues 835 to 855; sequence IGGIFIVLAAGLVLSVFVAIG. At 856-918 the chain is on the cytoplasmic side; that stretch reads EFIYKSRKNN…IRKQSSVHTV (63 aa).

It belongs to the glutamate-gated ion channel (TC 1.A.10.1) family. GRIK1 subfamily. As to quaternary structure, homotetramer or heterotetramer of pore-forming glutamate receptor subunits. Tetramers may be formed by the dimerization of dimers. Can form functional heteromeric receptors with GRIK4 and GRIK5. Interacts with KLHL17.

The protein localises to the cell membrane. It localises to the postsynaptic cell membrane. The enzyme catalyses Ca(2+)(in) = Ca(2+)(out). Functionally, ionotropic glutamate receptor that functions as a cation-permeable ligand-gated ion channel, gated by L-glutamate and the glutamatergic agonist kainic acid. L-glutamate acts as an excitatory neurotransmitter at many synapses in the central nervous system. Binding of the excitatory neurotransmitter L-glutamate induces a conformation change, leading to the opening of the cation channel, and thereby converts the chemical signal to an electrical impulse. The receptor then desensitizes rapidly and enters a transient inactive state, characterized by the presence of bound agonist. The polypeptide is Glutamate receptor ionotropic, kainate 1 (GRIK1) (Macaca fascicularis (Crab-eating macaque)).